Reading from the N-terminus, the 309-residue chain is Porphobilinogen deaminase (309 aa).

Residue cysteine 241 is modified to S-(dipyrrolylmethanemethyl)cysteine.

This sequence belongs to the HMBS family. Monomer. Dipyrromethane is required as a cofactor.

The catalysed reaction is 4 porphobilinogen + H2O = hydroxymethylbilane + 4 NH4(+). Its pathway is porphyrin-containing compound metabolism; protoporphyrin-IX biosynthesis; coproporphyrinogen-III from 5-aminolevulinate: step 2/4. Functionally, tetrapolymerization of the monopyrrole PBG into the hydroxymethylbilane pre-uroporphyrinogen in several discrete steps. The sequence is that of Porphobilinogen deaminase from Desulforamulus reducens (strain ATCC BAA-1160 / DSM 100696 / MI-1) (Desulfotomaculum reducens).